Reading from the N-terminus, the 2586-residue chain is Highly reducing polyketide synthase FUM1 (2586 aa).

The region spanning 29–451 (VLPVAIVGMG…GANAHCIIET (423 aa)) is the Ketosynthase family 3 (KS3) domain. Active-site for beta-ketoacyl synthase activity residues include Cys-201, His-336, and His-374. Residues 609-928 (IFTGQGAQWV…TESLLKLAGE (320 aa)) are malonyl-CoA:ACP transacylase (MAT) domain. Residues 980-1111 (HELLGSRTLE…GQVRPGQDAH (132 aa)) form an N-terminal hotdog fold region. The dehydratase (DH) domain stretch occupies residues 980–1269 (HELLGSRTLE…LEDGKFSPLE (290 aa)). The PKS/mFAS DH domain maps to 980–1274 (HELLGSRTLE…FSPLEMDLAE (295 aa)). His-1012 functions as the Proton acceptor; for dehydratase activity in the catalytic mechanism. The tract at residues 1125 to 1274 (QHYPRLVDNL…FSPLEMDLAE (150 aa)) is C-terminal hotdog fold. The Proton donor; for dehydratase activity role is filled by Asp-1186. A methyltransferase (CMet) domain region spans residues 1450–1627 (DFFATAGHTR…GFSGVDSAIY (178 aa)). The segment at 1862–2172 (GLLQTLGWVP…KGVHLGKIVV (311 aa)) is enoyl reductase (ER) (ER) domain. A ketoreductase (KR) domain region spans residues 2197-2373 (ASYLLVGGLG…ASVLQIGLIE (177 aa)). The region spanning 2486–2565 (PATVELVTNE…GLARLTVDGL (80 aa)) is the Carrier domain. Ser-2524 bears the O-(pantetheine 4'-phosphoryl)serine mark.

It functions in the pathway mycotoxin biosynthesis. In terms of biological role, highly reducing polyketide synthase; part of the gene cluster that mediates the biosynthesis of fumonisins B1 (FB1), B2 (FB2), B3 (FB3), and B4 (FB4), which are carcinogenic mycotoxins. The biosynthesis starts with the FUM1-catalyzed carbon chain assembly from one molecule of acetyl-CoA, eight molecules of malonyl-CoA, and two molecules of methionine (in S-adenosyl form). The C18 polyketide chain is released from the enzyme by a nucleophilic attack of a carbanion, which is derived from R-carbon of alanine by decarboxylation, on the carbonyl carbon of polyketide acyl chain. This step is catalyzed by the pyridoxal 5'-phosphate-dependent aminoacyl transferase FUM8. The resultant 3-keto intermediate is then stereospecifically reduced to a 3-hydroxyl product by reductase FUM13. Subsequent oxidations at C-10 by the cytochrome P450 monooxygenase FUM2, C-14 and C-15 by FUM6, FUM12 or FUM15, tricarballylic esterification of the hydroxyl groups on C-14 and C-15 by acyltransferase FUM14, and C-5 hydroxylation by 2-keto-glutarate-dependent dioxygenase FUM3 furnish the biosynthesis of fumonisins. The tricarballylic moieties are most likely derived from the citric acid cycle, and their addition to the carbon backbone may involve FUM7, FUM10, FUM11 and FUM14. This is Highly reducing polyketide synthase FUM1 from Gibberella moniliformis (strain M3125 / FGSC 7600) (Maize ear and stalk rot fungus).